The primary structure comprises 763 residues: Xaa-Pro dipeptidyl-peptidase (763 aa).

Residues S348, D468, and H498 each act as charge relay system in the active site.

Belongs to the peptidase S15 family. As to quaternary structure, homodimer.

It is found in the cytoplasm. It carries out the reaction Hydrolyzes Xaa-Pro-|- bonds to release unblocked, N-terminal dipeptides from substrates including Ala-Pro-|-p-nitroanilide and (sequentially) Tyr-Pro-|-Phe-Pro-|-Gly-Pro-|-Ile.. Functionally, removes N-terminal dipeptides sequentially from polypeptides having unsubstituted N-termini provided that the penultimate residue is proline. The protein is Xaa-Pro dipeptidyl-peptidase (pepX) of Lactococcus lactis subsp. cremoris (Streptococcus cremoris).